Reading from the N-terminus, the 889-residue chain is Alanine--tRNA ligase (889 aa).

Residues histidine 564, histidine 568, cysteine 671, and histidine 675 each contribute to the Zn(2+) site.

This sequence belongs to the class-II aminoacyl-tRNA synthetase family. It depends on Zn(2+) as a cofactor.

The protein localises to the cytoplasm. The catalysed reaction is tRNA(Ala) + L-alanine + ATP = L-alanyl-tRNA(Ala) + AMP + diphosphate. Its function is as follows. Catalyzes the attachment of alanine to tRNA(Ala) in a two-step reaction: alanine is first activated by ATP to form Ala-AMP and then transferred to the acceptor end of tRNA(Ala). Also edits incorrectly charged Ser-tRNA(Ala) and Gly-tRNA(Ala) via its editing domain. This Pelagibacter ubique (strain HTCC1062) protein is Alanine--tRNA ligase.